The following is a 213-amino-acid chain: tRNA (guanine-N(7)-)-methyltransferase (213 aa).

Glu43, Asp68, Asn95, and Asn117 together coordinate S-adenosyl-L-methionine. Residues Asp153 and 190–193 contribute to the substrate site; that span reads TEYE.

This sequence belongs to the class I-like SAM-binding methyltransferase superfamily. TrmB family.

The catalysed reaction is guanosine(46) in tRNA + S-adenosyl-L-methionine = N(7)-methylguanosine(46) in tRNA + S-adenosyl-L-homocysteine. It participates in tRNA modification; N(7)-methylguanine-tRNA biosynthesis. Its function is as follows. Catalyzes the formation of N(7)-methylguanine at position 46 (m7G46) in tRNA. The polypeptide is tRNA (guanine-N(7)-)-methyltransferase (Desulfitobacterium hafniense (strain DSM 10664 / DCB-2)).